The sequence spans 738 residues: Envelope glycoprotein gp160 (738 aa).

The first 21 residues, 1–21 (MCGKSLLCVASLLASAYLVYC), serve as a signal peptide directing secretion. The Extracellular portion of the chain corresponds to 22-670 (TQYVTVFYGV…LTSWIKYIQY (649 aa)). N-linked (GlcNAc...) asparagine; by host glycosylation is present at N36. Cysteines 43 and 56 form a disulfide. N-linked (GlcNAc...) asparagine; by host glycosylation is found at N69, N113, N117, N118, N132, N141, N169, N182, N197, N229, N232, N263, N269, N280, N291, N301, N356, N362, N389, N402, N439, N454, and N457. Cystine bridges form between C100-C205, C107-C196, C112-C153, C218-C248, and C228-C240. The segment at 112-152 (CNSTTNNTTTTGSTTGMSEINETSPSYSDNCTGLGKEEIVN) is V1. Positions 153-196 (CQFYMTGLERDKKKQYNETWYSKDVVCESNNTKDGKNRCYMNHC) are V2. Residues 296–328 (CKRPGNKTVVPITLMSGLVFHSQPINTRPRQAW) are V3. C296 and C329 are oxidised to a cystine. Disulfide bonds link C381/C438 and C388/C411. The interval 388-411 (CNMTWFLNWVENRPNQTQHNYAPC) is V4. The tract at residues 454–460 (NQTNITF) is V5. The tract at residues 503 to 523 (GVFVLGFLGFLATAGSAMGAA) is fusion peptide. Positions 566–582 (LQARVTAIEKYLKDQAQ) are immunosuppression. N602, N611, and N627 each carry an N-linked (GlcNAc...) asparagine; by host glycan. Positions 615–636 (QEWEKQVRYLEANISQSLEQAQ) form a coiled coil. The interval 648–669 (KLNSWDVFGNWFDLTSWIKYIQ) is MPER; binding to GalCer. The helical transmembrane segment at 671-691 (GVYIVVGVIVLRIAIYIVQLL) threads the bilayer. The Cytoplasmic portion of the chain corresponds to 692 to 738 (SRLRKGYRPVFSSPPGYLQQIHIHTDRGQPANEGTEEDDRDDDGYDL). The short motif at 698 to 701 (YRPV) is the YXXV motif; contains endocytosis signal element. A disordered region spans residues 716–738 (TDRGQPANEGTEEDDRDDDGYDL). Positions 725 to 738 (GTEEDDRDDDGYDL) are enriched in acidic residues.

As to quaternary structure, the mature envelope protein (Env) consists of a homotrimer of non-covalently associated gp120-gp41 heterodimers. The resulting complex protrudes from the virus surface as a spike. There seems to be as few as 10 spikes on the average virion. Interacts with human CD4, CCR5 and CXCR4, to form a P4HB/PDI-CD4-CXCR4-gp120 complex. Gp120 also interacts with the C-type lectins CD209/DC-SIGN and CLEC4M/DC-SIGNR (collectively referred to as DC-SIGN(R)). Gp120 and gp41 interact with GalCer. In terms of assembly, the mature envelope protein (Env) consists of a homotrimer of non-covalently associated gp120-gp41 heterodimers. The resulting complex protrudes from the virus surface as a spike. There seems to be as few as 10 spikes on the average virion. Specific enzymatic cleavages in vivo yield mature proteins. Envelope glycoproteins are synthesized as an inactive precursor that is heavily N-glycosylated and processed likely by host cell furin in the Golgi to yield the mature SU and TM proteins. The cleavage site between SU and TM requires the minimal sequence [KR]-X-[KR]-R. In terms of processing, palmitoylation of the transmembrane protein and of Env polyprotein (prior to its proteolytic cleavage) is essential for their association with host cell membrane lipid rafts. Palmitoylation is therefore required for envelope trafficking to classical lipid rafts, but not for viral replication.

Its subcellular location is the virion membrane. The protein resides in the host cell membrane. It localises to the host endosome membrane. Functionally, the surface protein gp120 (SU) attaches the virus to the host lymphoid cell by binding to the primary receptor CD4. This interaction induces a structural rearrangement creating a high affinity binding site for a chemokine coreceptor like CXCR4 and/or CCR5. This peculiar 2 stage receptor-interaction strategy allows gp120 to maintain the highly conserved coreceptor-binding site in a cryptic conformation, protected from neutralizing antibodies. Since CD4 also displays a binding site for the disulfide-isomerase P4HB/PDI, a P4HB/PDI-CD4-CXCR4-gp120 complex may form. In that complex, P4HB/PDI could reach and reduce gp120 disulfide bonds, causing major conformational changes in gp120. TXN, another PDI family member could also be involved in disulfide rearrangements in Env during fusion. These changes are transmitted to the transmembrane protein gp41 and are thought to activate its fusogenic potential by unmasking its fusion peptide. Its function is as follows. The surface protein gp120 is a ligand for CD209/DC-SIGN and CLEC4M/DC-SIGNR, which are respectively found on dendritic cells (DCs), and on endothelial cells of liver sinusoids and lymph node sinuses. These interactions allow capture of viral particles at mucosal surfaces by these cells and subsequent transmission to permissive cells. DCs are professional antigen presenting cells, critical for host immunity by inducing specific immune responses against a broad variety of pathogens. They act as sentinels in various tissues where they take up antigen, process it, and present it to T-cells following migration to lymphoid organs. HIV subverts the migration properties of dendritic cells to gain access to CD4+ T-cells in lymph nodes. Virus transmission to permissive T-cells occurs either in trans (without DCs infection, through viral capture and transmission), or in cis (following DCs productive infection, through the usual CD4-gp120 interaction), thereby inducing a robust infection. In trans infection, bound virions remain infectious over days and it is proposed that they are not degraded, but protected in non-lysosomal acidic organelles within the DCs close to the cell membrane thus contributing to the viral infectious potential during DCs' migration from the periphery to the lymphoid tissues. On arrival at lymphoid tissues, intact virions recycle back to DCs' cell surface allowing virus transmission to CD4+ T-cells. Virion capture also seems to lead to MHC-II-restricted viral antigen presentation, and probably to the activation of HIV-specific CD4+ cells. The transmembrane protein gp41 (TM) acts as a class I viral fusion protein. Under the current model, the protein has at least 3 conformational states: pre-fusion native state, pre-hairpin intermediate state, and post-fusion hairpin state. During fusion of viral and target intracellular membranes, the coiled coil regions (heptad repeats) assume a trimer-of-hairpins structure, positioning the fusion peptide in close proximity to the C-terminal region of the ectodomain. The formation of this structure appears to drive apposition and subsequent fusion of viral and target cell membranes. Complete fusion occurs in host cell endosomes and is dynamin-dependent, however some lipid transfer might occur at the plasma membrane. The virus undergoes clathrin-dependent internalization long before endosomal fusion, thus minimizing the surface exposure of conserved viral epitopes during fusion and reducing the efficacy of inhibitors targeting these epitopes. Membranes fusion leads to delivery of the nucleocapsid into the cytoplasm. In terms of biological role, the envelope glycoprotein gp160 precursor down-modulates cell surface CD4 antigen by interacting with it in the endoplasmic reticulum and blocking its transport to the cell surface. Functionally, the gp120-gp41 heterodimer seems to contribute to T-cell depletion during HIV-1 infection. The envelope glycoproteins expressed on the surface of infected cells induce apoptosis through an interaction with uninfected cells expressing the receptor (CD4) and the coreceptors CXCR4 or CCR5. This type of bystander killing may be obtained by at least three distinct mechanisms. First, the interaction between the 2 cells can induce cellular fusion followed by nuclear fusion within the syncytium. Syncytia are condemned to die from apoptosis. Second, the 2 interacting cells may not fuse entirely and simply exchange plasma membrane lipids, after a sort of hemifusion process, followed by rapid death. Third, it is possible that virus-infected cells, on the point of undergoing apoptosis, fuse with CD4-expressing cells, in which case apoptosis is rapidly transmitted from one cell to the other and thus occurs in a sort of contagious fashion. Its function is as follows. The gp120-gp41 heterodimer allows rapid transcytosis of the virus through CD4 negative cells such as simple epithelial monolayers of the intestinal, rectal and endocervical epithelial barriers. Both gp120 and gp41 specifically recognize glycosphingolipids galactosyl-ceramide (GalCer) or 3' sulfo-galactosyl-ceramide (GalS) present in the lipid rafts structures of epithelial cells. Binding to these alternative receptors allows the rapid transcytosis of the virus through the epithelial cells. This transcytotic vesicle-mediated transport of virions from the apical side to the basolateral side of the epithelial cells does not involve infection of the cells themselves. The sequence is that of Envelope glycoprotein gp160 (env) from Human immunodeficiency virus type 2 subtype A (isolate Ghana-1) (HIV-2).